The chain runs to 611 residues: Broad-specificity linear acyl-CoA dehydrogenase FadE5 (611 aa).

Residues 162–165 (MVLT), serine 171, and threonine 198 contribute to the FAD site. Serine 171 serves as a coordination point for a 2,3-saturated acyl-CoA. A 2,3-saturated acyl-CoA-binding positions include 224–225 (TK) and arginine 301. Residue arginine 326 participates in FAD binding. Lysine 338 is an a 2,3-saturated acyl-CoA binding site. An FAD-binding site is contributed by 420-424 (QTLGG). Glutamate 447 lines the a 2,3-saturated acyl-CoA pocket. Glutamate 447 functions as the Proton acceptor in the catalytic mechanism. Threonine 449 contributes to the FAD binding site. A 2,3-saturated acyl-CoA contacts are provided by residues aspartate 456 and 460–461 (RK).

Belongs to the acyl-CoA dehydrogenase family. In terms of assembly, homodimer. FAD serves as cofactor.

The catalysed reaction is a long-chain 2,3-saturated fatty acyl-CoA + oxidized [electron-transfer flavoprotein] + H(+) = a long-chain (2E)-enoyl-CoA + reduced [electron-transfer flavoprotein]. It carries out the reaction a medium-chain 2,3-saturated fatty acyl-CoA + oxidized [electron-transfer flavoprotein] + H(+) = a medium-chain (2E)-enoyl-CoA + reduced [electron-transfer flavoprotein]. The enzyme catalyses a short-chain 2,3-saturated fatty acyl-CoA + oxidized [electron-transfer flavoprotein] + H(+) = a short-chain (2E)-enoyl-CoA + reduced [electron-transfer flavoprotein]. It catalyses the reaction octadecanoyl-CoA + oxidized [electron-transfer flavoprotein] + H(+) = (2E)-octadecenoyl-CoA + reduced [electron-transfer flavoprotein]. The catalysed reaction is oxidized [electron-transfer flavoprotein] + hexadecanoyl-CoA + H(+) = (2E)-hexadecenoyl-CoA + reduced [electron-transfer flavoprotein]. It carries out the reaction dodecanoyl-CoA + oxidized [electron-transfer flavoprotein] + H(+) = (2E)-dodecenoyl-CoA + reduced [electron-transfer flavoprotein]. The enzyme catalyses decanoyl-CoA + oxidized [electron-transfer flavoprotein] + H(+) = (2E)-decenoyl-CoA + reduced [electron-transfer flavoprotein]. It catalyses the reaction hexanoyl-CoA + oxidized [electron-transfer flavoprotein] + H(+) = (2E)-hexenoyl-CoA + reduced [electron-transfer flavoprotein]. The catalysed reaction is butanoyl-CoA + oxidized [electron-transfer flavoprotein] + H(+) = (2E)-butenoyl-CoA + reduced [electron-transfer flavoprotein]. It participates in lipid metabolism; fatty acid metabolism. Functionally, acyl-CoA dehydrogenase that exhibits broad specificity for linear acyl-CoA substrates, with a preference for long-chain substrates. In Mycobacterium tuberculosis (strain ATCC 25618 / H37Rv), this protein is Broad-specificity linear acyl-CoA dehydrogenase FadE5.